Here is a 179-residue protein sequence, read N- to C-terminus: MTKKILLAVSGSIAAYKAADLSHQLTKLGYHVNVLMTNAAKQFIPPLTLQVLSKNPVYSNVMKEDDPQVINHIALAKQADLFLLAPASANTLAHLAHGFADNIVTSVALALPLEVPKFFAPAMNTKMYENPITQSNIALLKKFGYKEIQPKSSVLACGDVGSGALADLDTIIQKIEEQL.

Asn-124 provides a ligand contact to substrate. The active-site Proton donor is Cys-157.

This sequence belongs to the HFCD (homooligomeric flavin containing Cys decarboxylase) superfamily. FMN is required as a cofactor.

The enzyme catalyses N-[(R)-4-phosphopantothenoyl]-L-cysteine + H(+) = (R)-4'-phosphopantetheine + CO2. Its pathway is cofactor biosynthesis; coenzyme A biosynthesis; CoA from (R)-pantothenate: step 3/5. Its function is as follows. Catalyzes the decarboxylation of 4'-phosphopantothenoylcysteine to 4'-phosphopantetheine. This is Probable phosphopantothenoylcysteine decarboxylase (coaC) from Streptococcus mutans serotype c (strain ATCC 700610 / UA159).